Here is a 35-residue protein sequence, read N- to C-terminus: Photosystem II reaction center protein T (35 aa).

The chain crosses the membrane as a helical span at residues 3-23 (ALVYTFLLVSTLGIIFFAIFF).

Belongs to the PsbT family. PSII is composed of 1 copy each of membrane proteins PsbA, PsbB, PsbC, PsbD, PsbE, PsbF, PsbH, PsbI, PsbJ, PsbK, PsbL, PsbM, PsbT, PsbY, PsbZ, Psb30/Ycf12, at least 3 peripheral proteins of the oxygen-evolving complex and a large number of cofactors. It forms dimeric complexes.

The protein resides in the plastid. It is found in the chloroplast thylakoid membrane. Found at the monomer-monomer interface of the photosystem II (PS II) dimer, plays a role in assembly and dimerization of PSII. PSII is a light-driven water plastoquinone oxidoreductase, using light energy to abstract electrons from H(2)O, generating a proton gradient subsequently used for ATP formation. This is Photosystem II reaction center protein T from Stangeria eriopus (Natal grass cycad).